The primary structure comprises 160 residues: 2-C-methyl-D-erythritol 2,4-cyclodiphosphate synthase (160 aa).

2 residues coordinate a divalent metal cation: aspartate 12 and histidine 14. Residues 12–14 (DVH) and 38–39 (HS) contribute to the 4-CDP-2-C-methyl-D-erythritol 2-phosphate site. An a divalent metal cation-binding site is contributed by histidine 46. 4-CDP-2-C-methyl-D-erythritol 2-phosphate is bound by residues 60-62 (DIG), 65-69 (FPDTD), 136-139 (TTTE), phenylalanine 143, and arginine 146.

It belongs to the IspF family. As to quaternary structure, homotrimer. A divalent metal cation serves as cofactor.

It catalyses the reaction 4-CDP-2-C-methyl-D-erythritol 2-phosphate = 2-C-methyl-D-erythritol 2,4-cyclic diphosphate + CMP. It participates in isoprenoid biosynthesis; isopentenyl diphosphate biosynthesis via DXP pathway; isopentenyl diphosphate from 1-deoxy-D-xylulose 5-phosphate: step 4/6. In terms of biological role, involved in the biosynthesis of isopentenyl diphosphate (IPP) and dimethylallyl diphosphate (DMAPP), two major building blocks of isoprenoid compounds. Catalyzes the conversion of 4-diphosphocytidyl-2-C-methyl-D-erythritol 2-phosphate (CDP-ME2P) to 2-C-methyl-D-erythritol 2,4-cyclodiphosphate (ME-CPP) with a corresponding release of cytidine 5-monophosphate (CMP). This chain is 2-C-methyl-D-erythritol 2,4-cyclodiphosphate synthase, found in Acinetobacter baumannii (strain SDF).